A 101-amino-acid chain; its full sequence is UPF0134 protein MPN_675 (101 aa).

Belongs to the UPF0134 family.

The polypeptide is UPF0134 protein MPN_675 (Mycoplasma pneumoniae (strain ATCC 29342 / M129 / Subtype 1) (Mycoplasmoides pneumoniae)).